The chain runs to 472 residues: Divalent metal cation transporter MntH (472 aa).

The next 11 membrane-spanning stretches (helical) occupy residues 59–79 (LLAF…PGNW), 92–112 (MLLS…ALAA), 136–156 (LALW…EVIG), 167–187 (VPII…LLLM), 196–216 (AFVI…IVLA), 233–253 (VVAD…TVMP), 288–308 (LALM…AAVF), 325–345 (LLAP…ALLA), 377–397 (VLTR…YGEQ), 402–422 (LLLL…IPLL), and 439–459 (WLMV…VKLL).

The protein belongs to the NRAMP family.

It localises to the cell inner membrane. Its function is as follows. H(+)-stimulated, divalent metal cation uptake system. The sequence is that of Divalent metal cation transporter MntH from Xylella fastidiosa (strain 9a5c).